Consider the following 325-residue polypeptide: E3 ubiquitin-protein ligase EL5 (325 aa).

Residues 1–29 (MVRGVEQGGPAMDESSSSSSPSPVSAPAG) are disordered. The segment covering 15-28 (SSSSSSPSPVSAPA) has biased composition (low complexity). Residues 38–58 (IATVAAVLIVFAALTLAFVLL) form a helical membrane-spanning segment. Residues 70-105 (TTTSTSGRGRRPRPRRRSGSGGDGGTGGGVDPEVLR) form a disordered region. Over residues 77 to 87 (RGRRPRPRRRS) the composition is skewed to basic residues. A compositionally biased stretch (gly residues) spans 88–99 (GSGGDGGTGGGV). The segment at 134-176 (CAVCLAELEDGEEARFLPRCGHGFHAECVDMWLGSHSTCPLCR) adopts an RING-type; atypical zinc-finger fold. Disordered regions lie at residues 267–289 (GAAGSTSSCSCATGGDNDDGDVE) and 303–325 (AATPARPPEAEAGARTAAAHVRN). The segment covering 268–281 (AAGSTSSCSCATGG) has biased composition (low complexity).

The protein resides in the cell membrane. It carries out the reaction S-ubiquitinyl-[E2 ubiquitin-conjugating enzyme]-L-cysteine + [acceptor protein]-L-lysine = [E2 ubiquitin-conjugating enzyme]-L-cysteine + N(6)-ubiquitinyl-[acceptor protein]-L-lysine.. It functions in the pathway protein modification; protein ubiquitination. In terms of biological role, functions as an E3 ubiquitin-protein ligase in cooperation with the E2 ubiquitin conjugating enzymes UBC5A and UBC5B. Involved in root development. Required for the maintenance of cell viability after the initiation of root primordial formation. May mediate the degradation of cytotoxic proteins produced in root cells after the actions of auxin, cytokinin and jasmonic acid. Mediates 'Lys-48'-linked polyubiquitination of MBP in vitro. This Oryza sativa subsp. japonica (Rice) protein is E3 ubiquitin-protein ligase EL5 (EL5.1).